Here is a 96-residue protein sequence, read N- to C-terminus: UPF0235 protein SO_3356 (96 aa).

It belongs to the UPF0235 family.

The sequence is that of UPF0235 protein SO_3356 from Shewanella oneidensis (strain ATCC 700550 / JCM 31522 / CIP 106686 / LMG 19005 / NCIMB 14063 / MR-1).